The following is a 517-amino-acid chain: Cytochrome P450 11B, mitochondrial (517 aa).

Residues 1–45 constitute a mitochondrion transit peptide; that stretch reads MLEKTAARQIGSCLMRCRTLDTTSPLWTGFSRLSTAPLIHEARED. Cysteine 465 provides a ligand contact to heme.

This sequence belongs to the cytochrome P450 family. The cofactor is heme.

The protein localises to the mitochondrion membrane. The enzyme catalyses a steroid + 2 reduced [adrenodoxin] + O2 + 2 H(+) = an 11beta-hydroxysteroid + 2 oxidized [adrenodoxin] + H2O. Has 11 beta-hydroxylation, 18-hydroxylation activities and aldosterone synthetic activity. Catalyzes the final steps of glucocorticoid and mineralocorticoid biosynthesis. In Aquarana catesbeiana (American bullfrog), this protein is Cytochrome P450 11B, mitochondrial (CYP11B).